The sequence spans 91 residues: Large ribosomal subunit protein uL23 (91 aa).

This sequence belongs to the universal ribosomal protein uL23 family. In terms of assembly, part of the 50S ribosomal subunit. Contacts protein L29, and trigger factor when it is bound to the ribosome.

In terms of biological role, one of the early assembly proteins it binds 23S rRNA. One of the proteins that surrounds the polypeptide exit tunnel on the outside of the ribosome. Forms the main docking site for trigger factor binding to the ribosome. In Staphylococcus saprophyticus subsp. saprophyticus (strain ATCC 15305 / DSM 20229 / NCIMB 8711 / NCTC 7292 / S-41), this protein is Large ribosomal subunit protein uL23.